Reading from the N-terminus, the 378-residue chain is Chaperone protein DnaJ 2 (378 aa).

The J domain occupies aspartate 4–glycine 68. Residues glycine 130 to arginine 212 form a CR-type zinc finger. The Zn(2+) site is built by cysteine 143, cysteine 146, cysteine 160, cysteine 163, cysteine 186, cysteine 189, cysteine 200, and cysteine 203. 4 CXXCXGXG motif repeats span residues cysteine 143–glycine 150, cysteine 160–glycine 167, cysteine 186–glycine 193, and cysteine 200–glycine 207. The tract at residues arginine 351 to arginine 378 is disordered. The span at glycine 358–leucine 367 shows a compositional bias: polar residues.

This sequence belongs to the DnaJ family. In terms of assembly, homodimer. It depends on Zn(2+) as a cofactor.

The protein resides in the cytoplasm. In terms of biological role, participates actively in the response to hyperosmotic and heat shock by preventing the aggregation of stress-denatured proteins and by disaggregating proteins, also in an autonomous, DnaK-independent fashion. Unfolded proteins bind initially to DnaJ; upon interaction with the DnaJ-bound protein, DnaK hydrolyzes its bound ATP, resulting in the formation of a stable complex. GrpE releases ADP from DnaK; ATP binding to DnaK triggers the release of the substrate protein, thus completing the reaction cycle. Several rounds of ATP-dependent interactions between DnaJ, DnaK and GrpE are required for fully efficient folding. Also involved, together with DnaK and GrpE, in the DNA replication of plasmids through activation of initiation proteins. The sequence is that of Chaperone protein DnaJ 2 from Streptomyces avermitilis (strain ATCC 31267 / DSM 46492 / JCM 5070 / NBRC 14893 / NCIMB 12804 / NRRL 8165 / MA-4680).